Here is a 476-residue protein sequence, read N- to C-terminus: MTWETVIGLEIHVQLNTKSKIFSGASTAFGAEPNAHAGVVECALPGVLPVMNREVVEKAIKLGLALDAKINRKNVFDRKNYFYPDLPKGYQISQLDLPIVEHGKLEIVVGDDVKTINVTRAHMEEDAGKSVHEGLNGATGIDLNRAGTPLLEVVSEPEMRSAAEAVAYAKALHSLVTWLNICDGNMAEGSFRVDANVSVRPKGQAEFGTRREIKNLNSFRFLEQAINYEAEAQIEILEDGGKVQQATMLFDPEKGETRVMRLKEDAHDYRYFPDPDLLPVIISDDRLQKAKAEMPELPKEMAARFVADYGVSDYDARLLTASRVQAAYFEEAAKESGQGKLTANWMNGELAATLNKEGMELADSPITAPRLAALVGKIADGTLSSKLAKKAFEAMWAEPEASIAEIIEKHGLQQMTDTGAIEAMVDEVLANNAKAVEQFKSGNEKALNAIVGQVMKASKGKANPAQVQELIKAKLA.

It belongs to the GatB/GatE family. GatB subfamily. As to quaternary structure, heterotrimer of A, B and C subunits.

It catalyses the reaction L-glutamyl-tRNA(Gln) + L-glutamine + ATP + H2O = L-glutaminyl-tRNA(Gln) + L-glutamate + ADP + phosphate + H(+). The catalysed reaction is L-aspartyl-tRNA(Asn) + L-glutamine + ATP + H2O = L-asparaginyl-tRNA(Asn) + L-glutamate + ADP + phosphate + 2 H(+). Its function is as follows. Allows the formation of correctly charged Asn-tRNA(Asn) or Gln-tRNA(Gln) through the transamidation of misacylated Asp-tRNA(Asn) or Glu-tRNA(Gln) in organisms which lack either or both of asparaginyl-tRNA or glutaminyl-tRNA synthetases. The reaction takes place in the presence of glutamine and ATP through an activated phospho-Asp-tRNA(Asn) or phospho-Glu-tRNA(Gln). In Neisseria meningitidis serogroup A / serotype 4A (strain DSM 15465 / Z2491), this protein is Aspartyl/glutamyl-tRNA(Asn/Gln) amidotransferase subunit B.